The following is a 117-amino-acid chain: MDKKTARLSRSKRTRIKLRELGHTRLCVYRTPRHVYAQVISGDGSTVLVAASTVEKDVKAKCKYTGNVESAAIVGEIIANRCKEKGISQVAFDRSGYKYHGRVKALAEAAREHGLQF.

This sequence belongs to the universal ribosomal protein uL18 family. As to quaternary structure, part of the 50S ribosomal subunit; part of the 5S rRNA/L5/L18/L25 subcomplex. Contacts the 5S and 23S rRNAs.

This is one of the proteins that bind and probably mediate the attachment of the 5S RNA into the large ribosomal subunit, where it forms part of the central protuberance. This chain is Large ribosomal subunit protein uL18, found in Francisella tularensis subsp. novicida (strain U112).